A 545-amino-acid chain; its full sequence is Coiled-coil domain-containing protein 60 (545 aa).

A coiled-coil region spans residues 72-99 (NILREENAMKKKQQLLQKLKEEELNKFQ). The interval 224–284 (PAIRTAMASR…DNESSSTKPE (61 aa)) is disordered. The segment covering 238–259 (RGSTLSLTRTSGGSSPQSSMMS) has biased composition (low complexity).

This Mus musculus (Mouse) protein is Coiled-coil domain-containing protein 60 (Ccdc60).